The chain runs to 305 residues: UDP-3-O-acyl-N-acetylglucosamine deacetylase (305 aa).

3 residues coordinate Zn(2+): H79, H238, and D242. The Proton donor role is filled by H265.

It belongs to the LpxC family. It depends on Zn(2+) as a cofactor.

The enzyme catalyses a UDP-3-O-[(3R)-3-hydroxyacyl]-N-acetyl-alpha-D-glucosamine + H2O = a UDP-3-O-[(3R)-3-hydroxyacyl]-alpha-D-glucosamine + acetate. Its pathway is glycolipid biosynthesis; lipid IV(A) biosynthesis; lipid IV(A) from (3R)-3-hydroxytetradecanoyl-[acyl-carrier-protein] and UDP-N-acetyl-alpha-D-glucosamine: step 2/6. Functionally, catalyzes the hydrolysis of UDP-3-O-myristoyl-N-acetylglucosamine to form UDP-3-O-myristoylglucosamine and acetate, the committed step in lipid A biosynthesis. The chain is UDP-3-O-acyl-N-acetylglucosamine deacetylase from Escherichia coli O45:K1 (strain S88 / ExPEC).